Here is a 528-residue protein sequence, read N- to C-terminus: Light-independent protochlorophyllide reductase subunit B (528 aa).

Asp36 contributes to the [4Fe-4S] cluster binding site. Asp274 (proton donor) is an active-site residue. Gly409–Leu410 is a binding site for substrate. Residues Gly429–Ala471 are disordered. Low complexity predominate over residues Ala444–Ser465.

Belongs to the ChlB/BchB/BchZ family. In terms of assembly, protochlorophyllide reductase is composed of three subunits; BchL, BchN and BchB. Forms a heterotetramer of two BchB and two BchN subunits. It depends on [4Fe-4S] cluster as a cofactor.

The catalysed reaction is chlorophyllide a + oxidized 2[4Fe-4S]-[ferredoxin] + 2 ADP + 2 phosphate = protochlorophyllide a + reduced 2[4Fe-4S]-[ferredoxin] + 2 ATP + 2 H2O. It functions in the pathway porphyrin-containing compound metabolism; bacteriochlorophyll biosynthesis (light-independent). Functionally, component of the dark-operative protochlorophyllide reductase (DPOR) that uses Mg-ATP and reduced ferredoxin to reduce ring D of protochlorophyllide (Pchlide) to form chlorophyllide a (Chlide). This reaction is light-independent. The NB-protein (BchN-BchB) is the catalytic component of the complex. The chain is Light-independent protochlorophyllide reductase subunit B from Dinoroseobacter shibae (strain DSM 16493 / NCIMB 14021 / DFL 12).